The primary structure comprises 461 residues: mRNA cap guanine-N(7) methyltransferase (461 aa).

The segment at Met1–Glu117 is disordered. Phosphoserine occurs at positions 11, 15, 16, and 58. 2 stretches are compositionally biased toward polar residues: residues Glu14 to Arg29 and Glu49 to Ser58. The segment covering Leu65–Gly93 has biased composition (basic and acidic residues). 2 positions are modified to phosphoserine: Ser94 and Ser99. The Nuclear localization signal signature appears at Lys107–Lys109. The 309-residue stretch at Ser152–Gln460 folds into the mRNA cap 0 methyltransferase domain. Residue Asn161 to Asn162 coordinates mRNA. 6 residues coordinate S-adenosyl-L-methionine: Lys165, Gly190, Asp212, Asp246, Gln269, and Tyr274.

It belongs to the class I-like SAM-binding methyltransferase superfamily. mRNA cap 0 methyltransferase family. Interacts with importin alpha, leading to stimulate both RNA-binding and methyltransferase activity. Interaction with importin alpha and beta is required for its nuclear localization, importin beta dissociating in response to RanGTP, allowing RNMT-importin alpha to bind RNA substrates. Interacts with elongating form of polymerase II and RNGTT. Interacts with RAMAC, this interaction significantly enhances RNA-binding and cap methyltransferase activity.

The protein resides in the nucleus. The catalysed reaction is a 5'-end (5'-triphosphoguanosine)-ribonucleoside in mRNA + S-adenosyl-L-methionine = a 5'-end (N(7)-methyl 5'-triphosphoguanosine)-ribonucleoside in mRNA + S-adenosyl-L-homocysteine. Methyltransferase activity is activated by RAMAC. Functionally, catalytic subunit of the mRNA-capping methyltransferase RNMT:RAMAC complex that methylates the N7 position of the added guanosine to the 5'-cap structure of mRNAs. Binds RNA containing 5'-terminal GpppC. This Rattus norvegicus (Rat) protein is mRNA cap guanine-N(7) methyltransferase (Rnmt).